A 426-amino-acid polypeptide reads, in one-letter code: Serine--tRNA ligase (426 aa).

232–234 (TAE) contributes to the L-serine binding site. 263–265 (RRE) is a binding site for ATP. Glu-286 serves as a coordination point for L-serine. 350-353 (EISS) provides a ligand contact to ATP. L-serine is bound at residue Ser-385.

It belongs to the class-II aminoacyl-tRNA synthetase family. Type-1 seryl-tRNA synthetase subfamily. In terms of assembly, homodimer. The tRNA molecule binds across the dimer.

Its subcellular location is the cytoplasm. It catalyses the reaction tRNA(Ser) + L-serine + ATP = L-seryl-tRNA(Ser) + AMP + diphosphate + H(+). The enzyme catalyses tRNA(Sec) + L-serine + ATP = L-seryl-tRNA(Sec) + AMP + diphosphate + H(+). Its pathway is aminoacyl-tRNA biosynthesis; selenocysteinyl-tRNA(Sec) biosynthesis; L-seryl-tRNA(Sec) from L-serine and tRNA(Sec): step 1/1. Functionally, catalyzes the attachment of serine to tRNA(Ser). Is also able to aminoacylate tRNA(Sec) with serine, to form the misacylated tRNA L-seryl-tRNA(Sec), which will be further converted into selenocysteinyl-tRNA(Sec). The polypeptide is Serine--tRNA ligase (Fervidobacterium nodosum (strain ATCC 35602 / DSM 5306 / Rt17-B1)).